Consider the following 418-residue polypeptide: MTLLALGINHKTAPVSLRERVSFSPDKLDQALDSLLAQPMVQGGVVLSTCNRTELYLSVEERDDLQEALIRWLCDYHNLNEDDLRNSLYWHQDNDAVSHLMRVASGLDSLVLGEPQILGQVKKAFADSQKGHMKASELERMFQKSFSVAKRVRTETDIGASAVSVAFAACTLARQIFESLSTVTVLLVGAGETIELVTRHLREHKVQKMIIANRTRERAQILADEVGAEVIALSDIDERLREADIIISSTASPLPIIGKGMVERALKSRRNQPMLLVDIAVPRDVEPEVGKLANAYLYSVDDLQSIISHNLAQRKAAAVEAETIVAQEASEFMAWLRAQSASETIRDYRSQAEQVRDELTAKALAALEQGGDAQTIMQDLAWKLTNRLIHAPTKSLQQAARDGDNERLNILRDSLGLE.

Residues 49–52 (TCNR), serine 109, 114–116 (EPQ), and glutamine 120 each bind substrate. The active-site Nucleophile is cysteine 50. 189 to 194 (GAGETI) contributes to the NADP(+) binding site.

This sequence belongs to the glutamyl-tRNA reductase family. Homodimer.

It carries out the reaction (S)-4-amino-5-oxopentanoate + tRNA(Glu) + NADP(+) = L-glutamyl-tRNA(Glu) + NADPH + H(+). It functions in the pathway porphyrin-containing compound metabolism; protoporphyrin-IX biosynthesis; 5-aminolevulinate from L-glutamyl-tRNA(Glu): step 1/2. In terms of biological role, catalyzes the NADPH-dependent reduction of glutamyl-tRNA(Glu) to glutamate 1-semialdehyde (GSA). The polypeptide is Glutamyl-tRNA reductase (Escherichia coli O1:K1 / APEC).